The following is a 137-amino-acid chain: MSAHLQWMVVRNCSSFLIKRNKQTYSTEPNNLKARNSFRYNGLIHRKTVGVEAWPDGKGVVVVMKRRSGQRKPATSYVRTTINKNARATLSSIRHMIRKNKYRPDLRMAAIRRASAILRSQKPVVVKRKRTRPTKSS.

Residue serine 2 is modified to N-acetylserine. Glycyl lysine isopeptide (Lys-Gly) (interchain with G-Cter in SUMO2) cross-links involve residues lysine 58 and lysine 65. Position 115 is a phosphoserine (serine 115).

It belongs to the eukaryotic ribosomal protein eL28 family. Component of the large ribosomal subunit.

The protein resides in the cytoplasm. Functionally, component of the large ribosomal subunit. The ribosome is a large ribonucleoprotein complex responsible for the synthesis of proteins in the cell. This Rattus norvegicus (Rat) protein is Large ribosomal subunit protein eL28 (Rpl28).